A 1004-amino-acid chain; its full sequence is Importin subunit beta-5 (1004 aa).

M1 is modified (N-acetylmethionine). Residues 21–100 form the Importin N-terminal domain; the sequence is AETQLLQWCD…REVLLKLCLN (80 aa).

Belongs to the importin beta family. In terms of assembly, interacts with NAP1.

Its subcellular location is the cytoplasm. The protein resides in the nucleus. It is found in the nuclear pore complex. Functionally, required for nuclear protein import and mediates docking of import substrate to distinct nucleoporins. Serves a receptor for nuclear localization signals. Mediates the nuclear import of TATA-binding protein (TBP) and of histones H2A and H2B. The chain is Importin subunit beta-5 (KAP114) from Saccharomyces cerevisiae (strain ATCC 204508 / S288c) (Baker's yeast).